The sequence spans 357 residues: N-methyltransferase dtpB (357 aa).

Belongs to the methyltransferase superfamily.

Its pathway is alkaloid biosynthesis. Its function is as follows. N-methyltransferase; part of the gene cluster that mediates the biosynthesis of the dimeric diketopiperazine alkaloid ditryptophenaline. The nonribosomal peptide synthase dtpA accepts L-tryptophan and L-phenylalanine as its substrates and forms the phenylalanyl-tryptophanyl cyclic dipeptide product cyclophenylalanyltryptophenyl. The N-methyltransferase dtpB is responsible for the N-methylation of cyclophenylalanyltryptophenyl to yield cyclo-N-methylphenylalanyltryptophenyl. The cytochrome P450 monooxygenase is responsible not only for pyrroloindole ring formation but also for concurrent dimerization of N-methylphenylalanyltryptophanyl diketopiperazine monomers into a homodimeric product. This chain is N-methyltransferase dtpB, found in Aspergillus flavus (strain ATCC 200026 / FGSC A1120 / IAM 13836 / NRRL 3357 / JCM 12722 / SRRC 167).